A 79-amino-acid polypeptide reads, in one-letter code: Neurotoxin BmK-M9 (79 aa).

The first 14 residues, 1–14 (MISFALLLMTGVES), serve as a signal peptide directing secretion. Residues 16 to 78 (RDAYIAKPEN…VPIRVPGKCH (63 aa)) enclose the LCN-type CS-alpha/beta domain. Intrachain disulfides connect Cys26–Cys77, Cys30–Cys50, Cys36–Cys60, and Cys40–Cys62. Arg79 is a propeptide (removed by a carboxypeptidase).

This sequence belongs to the long (4 C-C) scorpion toxin superfamily. Sodium channel inhibitor family. Alpha subfamily. In terms of tissue distribution, expressed by the venom gland.

It is found in the secreted. In terms of biological role, binds to sodium channels (Nav) and inhibits the inactivation of the activated channels, thereby blocking neuronal transmission. This toxin is active against mammals. The polypeptide is Neurotoxin BmK-M9 (Olivierus martensii (Manchurian scorpion)).